Reading from the N-terminus, the 194-residue chain is Holliday junction branch migration complex subunit RuvA (194 aa).

The segment at 1-64 (MIGRLRGVLT…DDSAALYGFL (64 aa)) is domain I. Residues 65–140 (SESERRLFRH…RAADFNNGIS (76 aa)) are domain II. The flexible linker stretch occupies residues 140–144 (STSGK). The tract at residues 145–194 (LNLDTVSEAALALQQLGYKPAEAARMARDAGTESDDVATVIKKALQAALC) is domain III.

This sequence belongs to the RuvA family. In terms of assembly, homotetramer. Forms an RuvA(8)-RuvB(12)-Holliday junction (HJ) complex. HJ DNA is sandwiched between 2 RuvA tetramers; dsDNA enters through RuvA and exits via RuvB. An RuvB hexamer assembles on each DNA strand where it exits the tetramer. Each RuvB hexamer is contacted by two RuvA subunits (via domain III) on 2 adjacent RuvB subunits; this complex drives branch migration. In the full resolvosome a probable DNA-RuvA(4)-RuvB(12)-RuvC(2) complex forms which resolves the HJ.

Its subcellular location is the cytoplasm. In terms of biological role, the RuvA-RuvB-RuvC complex processes Holliday junction (HJ) DNA during genetic recombination and DNA repair, while the RuvA-RuvB complex plays an important role in the rescue of blocked DNA replication forks via replication fork reversal (RFR). RuvA specifically binds to HJ cruciform DNA, conferring on it an open structure. The RuvB hexamer acts as an ATP-dependent pump, pulling dsDNA into and through the RuvAB complex. HJ branch migration allows RuvC to scan DNA until it finds its consensus sequence, where it cleaves and resolves the cruciform DNA. The chain is Holliday junction branch migration complex subunit RuvA from Xylella fastidiosa (strain M12).